We begin with the raw amino-acid sequence, 179 residues long: Large ribosomal subunit protein uL5 (179 aa).

This sequence belongs to the universal ribosomal protein uL5 family. As to quaternary structure, part of the 50S ribosomal subunit; part of the 5S rRNA/L5/L18/L25 subcomplex. Contacts the 5S rRNA and the P site tRNA. Forms a bridge to the 30S subunit in the 70S ribosome.

This is one of the proteins that bind and probably mediate the attachment of the 5S RNA into the large ribosomal subunit, where it forms part of the central protuberance. In the 70S ribosome it contacts protein S13 of the 30S subunit (bridge B1b), connecting the 2 subunits; this bridge is implicated in subunit movement. Contacts the P site tRNA; the 5S rRNA and some of its associated proteins might help stabilize positioning of ribosome-bound tRNAs. This Dechloromonas aromatica (strain RCB) protein is Large ribosomal subunit protein uL5.